The following is a 369-amino-acid chain: Glutamate 5-kinase (369 aa).

Lysine 9 contributes to the ATP binding site. Serine 49, aspartate 136, and asparagine 148 together coordinate substrate. ATP-binding positions include 168–169 and 210–216; these read TD and TGGMLTK. A PUA domain is found at 275–355; the sequence is QGSIWVDKGA…KGVLIYRDDW (81 aa).

The protein belongs to the glutamate 5-kinase family.

It localises to the cytoplasm. It catalyses the reaction L-glutamate + ATP = L-glutamyl 5-phosphate + ADP. It participates in amino-acid biosynthesis; L-proline biosynthesis; L-glutamate 5-semialdehyde from L-glutamate: step 1/2. Its function is as follows. Catalyzes the transfer of a phosphate group to glutamate to form L-glutamate 5-phosphate. This chain is Glutamate 5-kinase, found in Streptococcus pneumoniae (strain ATCC 700669 / Spain 23F-1).